Here is a 284-residue protein sequence, read N- to C-terminus: Homeobox protein SIX1 (284 aa).

Residues 124-183 (GEETSYCFKEKSRGVLREWYAHNPYPSPREKRELAEATGLTTTQVSNWFKNRRQRDRAAE) constitute a DNA-binding region (homeobox). Residues 168-284 (VSNWFKNRRQ…LTSSLVDLGS (117 aa)) are disordered. Residues 179–190 (DRAAEAKERENT) show a composition bias toward basic and acidic residues. The segment covering 227-284 (DQNSVLLLQSNMGHARSSNYSLPGLTASQPSHGLQAHQHQLQDSLLGPLTSSLVDLGS) has biased composition (polar residues).

It belongs to the SIX/Sine oculis homeobox family. In terms of assembly, interacts with DACH1. Interacts with EYA1. Interacts with EYA2. Interacts with CDH1. Interacts with TBX18. Interacts with CEBPA. Interacts with CEBPB. Interacts with EBF2. Phosphorylated during interphase; becomes hyperphosphorylated during mitosis. Hyperphosphorylation impairs binding to promoter elements. In terms of processing, ubiquitinated by the anaphase promoting complex (APC), leading to its proteasomal degradation. As to expression, expressed in phalangeal tendons and in skeletal muscle and in head and body mesenchyme.

The protein resides in the nucleus. The protein localises to the cytoplasm. Its function is as follows. Transcription factor that is involved in the regulation of cell proliferation, apoptosis and embryonic development. Plays an important role in the development of several organs, including kidney, muscle and inner ear. Depending on context, functions as a transcriptional repressor or activator. Lacks an activation domain, and requires interaction with EYA family members for transcription activation. Mediates nuclear translocation of EYA1 and EYA2. Binds the 5'-TCA[AG][AG]TTNC-3' motif present in the MEF3 element in the MYOG promoter and CIDEA enhancer. Regulates the expression of numerous genes, including MYC, CCNA1, CCND1 and EZR. Acts as an activator of the IGFBP5 promoter, probably coactivated by EYA2. Repression of precursor cell proliferation in myoblasts is switched to activation through recruitment of EYA3 to the SIX1-DACH1 complex. During myogenesis, seems to act together with EYA2 and DACH2. Regulates the expression of CCNA1. Promotes brown adipocyte differentiation. The sequence is that of Homeobox protein SIX1 (Six1) from Mus musculus (Mouse).